The sequence spans 419 residues: Farnesyl pyrophosphate synthase (419 aa).

Met-1 carries the N-acetylmethionine modification. Positions 123, 126, and 162 each coordinate isopentenyl diphosphate. The residue at position 123 (Lys-123) is an N6-(2-hydroxyisobutyryl)lysine; alternate. The residue at position 123 (Lys-123) is an N6-acetyllysine; alternate. Residues Asp-169 and Asp-173 each contribute to the Mg(2+) site. A dimethylallyl diphosphate-binding site is contributed by Arg-178. Arg-179 contacts isopentenyl diphosphate. Dimethylallyl diphosphate contacts are provided by Lys-266, Thr-267, Gln-306, Lys-323, and Lys-332. An N6-acetyllysine modification is found at Lys-353.

It belongs to the FPP/GGPP synthase family. In terms of assembly, homodimer. Interacts with RSAD2. (Microbial infection) Interacts with HTLV-1 protein p13(II). It depends on Mg(2+) as a cofactor.

It localises to the cytoplasm. It carries out the reaction isopentenyl diphosphate + dimethylallyl diphosphate = (2E)-geranyl diphosphate + diphosphate. It catalyses the reaction isopentenyl diphosphate + (2E)-geranyl diphosphate = (2E,6E)-farnesyl diphosphate + diphosphate. It functions in the pathway isoprenoid biosynthesis; farnesyl diphosphate biosynthesis; farnesyl diphosphate from geranyl diphosphate and isopentenyl diphosphate: step 1/1. Its pathway is isoprenoid biosynthesis; geranyl diphosphate biosynthesis; geranyl diphosphate from dimethylallyl diphosphate and isopentenyl diphosphate: step 1/1. Its activity is regulated as follows. Inactivated by interferon-induced RSAD2. This inactivation may result of disruption of lipid rafts at the plasma membrane, and thus have an antiviral effect since many enveloped viruses need lipid rafts to bud efficiently out of the cell. In terms of biological role, key enzyme in isoprenoid biosynthesis which catalyzes the formation of farnesyl diphosphate (FPP), a precursor for several classes of essential metabolites including sterols, dolichols, carotenoids, and ubiquinones. FPP also serves as substrate for protein farnesylation and geranylgeranylation. Catalyzes the sequential condensation of isopentenyl pyrophosphate with the allylic pyrophosphates, dimethylallyl pyrophosphate, and then with the resultant geranylpyrophosphate to the ultimate product farnesyl pyrophosphate. This Homo sapiens (Human) protein is Farnesyl pyrophosphate synthase.